We begin with the raw amino-acid sequence, 192 residues long: Peptidyl-tRNA hydrolase (192 aa).

TRNA is bound at residue Y14. The Proton acceptor role is filled by H19. Positions 61, 63, and 107 each coordinate tRNA.

This sequence belongs to the PTH family. Monomer.

It localises to the cytoplasm. It catalyses the reaction an N-acyl-L-alpha-aminoacyl-tRNA + H2O = an N-acyl-L-amino acid + a tRNA + H(+). Functionally, hydrolyzes ribosome-free peptidyl-tRNAs (with 1 or more amino acids incorporated), which drop off the ribosome during protein synthesis, or as a result of ribosome stalling. In terms of biological role, catalyzes the release of premature peptidyl moieties from peptidyl-tRNA molecules trapped in stalled 50S ribosomal subunits, and thus maintains levels of free tRNAs and 50S ribosomes. The protein is Peptidyl-tRNA hydrolase of Wolinella succinogenes (strain ATCC 29543 / DSM 1740 / CCUG 13145 / JCM 31913 / LMG 7466 / NCTC 11488 / FDC 602W) (Vibrio succinogenes).